A 310-amino-acid chain; its full sequence is MSENRIRIATRKSPLAMWQAEFVKAELERIHPGIVVELLPMSTKGDVILDTPLAKVGGKGLFVKELEVAMLDDLADIAVHSMKDVPVDFPEGLGLEVICEREDPRDAFVSNLYKSISELPLGATVGTSSLRRQCQIRASRPDLIIKDLRGNVGTRLAKLDNGEYDAIILAAAGLIRLKLSERIASFISAEESLPANGQGAVGIECRINDERVKALLAPLEHLETRYRVLAERAMNTRLEGGCQVPIGAFAEIDGDEMTLRGLVGNPDGSEIIEGVITGPKTDATQLGVALAEELLSKGAKSILDAVYAKA.

S-(dipyrrolylmethanemethyl)cysteine is present on Cys-242.

This sequence belongs to the HMBS family. Monomer. It depends on dipyrromethane as a cofactor.

The enzyme catalyses 4 porphobilinogen + H2O = hydroxymethylbilane + 4 NH4(+). The protein operates within porphyrin-containing compound metabolism; protoporphyrin-IX biosynthesis; coproporphyrinogen-III from 5-aminolevulinate: step 2/4. Functionally, tetrapolymerization of the monopyrrole PBG into the hydroxymethylbilane pre-uroporphyrinogen in several discrete steps. The protein is Porphobilinogen deaminase of Shewanella baltica (strain OS195).